The chain runs to 349 residues: tRNA pseudouridine synthase D (349 aa).

Position 27 (F27) interacts with substrate. D80 serves as the catalytic Nucleophile. Position 129 (N129) interacts with substrate. Residues 155–303 enclose the TRUD domain; the sequence is GVPNYFGAQR…VEAARRAMLL (149 aa). F329 contributes to the substrate binding site.

This sequence belongs to the pseudouridine synthase TruD family.

It catalyses the reaction uridine(13) in tRNA = pseudouridine(13) in tRNA. Functionally, responsible for synthesis of pseudouridine from uracil-13 in transfer RNAs. This is tRNA pseudouridine synthase D from Escherichia coli O81 (strain ED1a).